Consider the following 283-residue polypeptide: Non-selective voltage-gated ion channel VDAC1 (283 aa).

Alanine 2 carries the N-acetylalanine modification. Residue lysine 12 coordinates ATP. Lysine 12 is covalently cross-linked (Glycyl lysine isopeptide (Lys-Gly) (interchain with G-Cter in ubiquitin)). Serine 13 is modified (phosphoserine). Threonine 19 carries the phosphothreonine modification. Lysine 20 is an ATP binding site. At lysine 20 the chain carries N6-acetyllysine; alternate. N6-succinyllysine; alternate is present on lysine 20. A Glycyl lysine isopeptide (Lys-Gly) (interchain with G-Cter in ubiquitin); alternate cross-link involves residue lysine 20. Beta stranded transmembrane passes span 26-35 (LIKLDLKTKS) and 39-47 (LEFTSSGSA). Residues lysine 53 and lysine 61 each participate in a glycyl lysine isopeptide (Lys-Gly) (interchain with G-Cter in ubiquitin) cross-link. The chain crosses the membrane as a beta stranded span at residues 54-64 (VTGSLETKYRW). The residue at position 67 (tyrosine 67) is a Phosphotyrosine. Transmembrane regions (beta stranded) follow at residues 69–76 (LTFTEKWN), 80–89 (TLGTEITVED), and 95–104 (LKLTFDSSFS). Threonine 107 bears the Phosphothreonine mark. An N6-acetyllysine; alternate modification is found at lysine 109. Lysine 109 participates in a covalent cross-link: Glycyl lysine isopeptide (Lys-Gly) (interchain with G-Cter in ubiquitin); alternate. Lysine 110 participates in a covalent cross-link: Glycyl lysine isopeptide (Lys-Gly) (interchain with G-Cter in ubiquitin). The next 4 beta stranded transmembrane spans lie at 111 to 120 (NAKIKTGYKR), 123 to 130 (INLGCDMD), 137 to 145 (SIRGALVLG), and 150 to 158 (LAGYQMNFE). Lysine 161 is covalently cross-linked (Glycyl lysine isopeptide (Lys-Gly) (interchain with G-Cter in ubiquitin)). The next 6 membrane-spanning stretches (beta stranded) occupy residues 163–175 (RVTQ…GYKT), 178–185 (FQLHTNVN), 189–198 (EFGGSIYQKV), 202–211 (LETAVNLAWT), 218–227 (RFGIAAKYQI), and 231–238 (ACFSAKVN). Serine 193 carries the phosphoserine; by NEK1 modification. Phosphoserine is present on serine 240. 242–244 (LIG) is a binding site for NAD(+). A beta stranded transmembrane segment spans residues 242–251 (LIGLGYTQTL). At lysine 252 the chain carries N6-acetyllysine. Residues 254–263 (GIKLTLSALL) form a beta stranded membrane-spanning segment. 260-264 (SALLD) provides a ligand contact to NAD(+). An N6-acetyllysine; alternate modification is found at lysine 266. Residue lysine 266 forms a Glycyl lysine isopeptide (Lys-Gly) (interchain with G-Cter in ubiquitin); alternate linkage. The beta stranded transmembrane segment at 273 to 282 (HKLGLGLEFQ) threads the bilayer. Lysine 274 participates in a covalent cross-link: Glycyl lysine isopeptide (Lys-Gly) (interchain with G-Cter in ubiquitin).

This sequence belongs to the eukaryotic mitochondrial porin family. As to quaternary structure, homodimer and homotrimer; in response to cyclic AMP or calcium; oligomerization is required for scramblase activity. Component of the mitochondrial permeability transition pore complex (mPTPC), at least composed of SPG7, VDAC1 and PPIF. Interacts with SPG7, NIPSNAP2 and SLC25A30. Interacts with hexokinases including HK1. The HK1-VDAC1 complex interacts with ATF2. Interacts with BCL2L1. Interacts with BAK1. Interacts with RTL10/BOP (via BH3 domain). Interacts with amyloid-beta and APP; induces VDAC1 dephosphorylation. Interacts with TMEM41B. Interacts with BCAP31. Interacts with HSPA9; this interaction couples ITPR1 to VDAC1. (Microbial infection) Interacts with influenza A virus PB1-F2 protein. Phosphorylation at Ser-193 by NEK1 promotes the closed conformational state preventing excessive mitochondrial membrane permeability and subsequent apoptotic cell death after injury. Phosphorylation by the AKT-GSK3B axis stabilizes the protein probably by preventing ubiquitin-mediated proteasomal degradation. Post-translationally, ubiquitinated. Undergoes monoubiquitination and polyubiquitination by PRKN; monoubiquitination at Lys-274 inhibits apoptosis, whereas polyubiquitination leads to its degradation and promotes mitophagy. Deubiquitinated by USP30. In terms of tissue distribution, expressed in erythrocytes (at protein level). Expressed in heart, liver and skeletal muscle.

Its subcellular location is the mitochondrion outer membrane. The protein localises to the cell membrane. The protein resides in the membrane raft. The enzyme catalyses chloride(in) = chloride(out). It carries out the reaction K(+)(in) = K(+)(out). It catalyses the reaction ATP(in) = ATP(out). The catalysed reaction is Ca(2+)(in) = Ca(2+)(out). The enzyme catalyses Na(+)(in) = Na(+)(out). It carries out the reaction Mg(2+)(in) = Mg(2+)(out). It catalyses the reaction L-glutamate(out) = L-glutamate(in). The catalysed reaction is dopamine(out) = dopamine(in). The enzyme catalyses acetylcholine(in) = acetylcholine(out). It carries out the reaction Fe(III)-[cytochrome c](out) = Fe(III)-[cytochrome c](in). It catalyses the reaction a 1,2-diacyl-sn-glycero-3-phosphocholine(in) = a 1,2-diacyl-sn-glycero-3-phosphocholine(out). The catalysed reaction is a 1,2-diacyl-sn-glycero-3-phospho-L-serine(in) = a 1,2-diacyl-sn-glycero-3-phospho-L-serine(out). Inhibited by nitric oxide. Functionally, non-selective voltage-gated ion channel that mediates the transport of anions and cations through the mitochondrion outer membrane and plasma membrane. The channel at the outer mitochondrial membrane allows diffusion of small hydrophilic molecules; in the plasma membrane it is involved in cell volume regulation and apoptosis. It adopts an open conformation at low or zero membrane potential and a closed conformation at potentials above 30-40 mV. The open state has a weak anion selectivity whereas the closed state is cation-selective. Binds various signaling molecules, including the sphingolipid ceramide, the phospholipid phosphatidylcholine, and the sterols cholesterol and oxysterol. In depolarized mitochondria, acts downstream of PRKN and PINK1 to promote mitophagy or prevent apoptosis; polyubiquitination by PRKN promotes mitophagy, while monoubiquitination by PRKN decreases mitochondrial calcium influx which ultimately inhibits apoptosis. May participate in the formation of the permeability transition pore complex (PTPC) responsible for the release of mitochondrial products that triggers apoptosis. May mediate ATP export from cells. Part of a complex composed of HSPA9, ITPR1 and VDAC1 that regulates mitochondrial calcium-dependent apoptosis by facilitating calcium transport from the ER lumen to the mitochondria intermembrane space thus providing calcium for the downstream calcium channel MCU that directly releases it into mitochondria matrix. Mediates cytochrome c efflux. In terms of biological role, catalyzes the scrambling of phospholipids across the outer mitochondrial membrane; the mechanism is unrelated to channel activity and is capable of translocating both anionic and zwitterionic phospholipids. The chain is Non-selective voltage-gated ion channel VDAC1 from Homo sapiens (Human).